A 550-amino-acid polypeptide reads, in one-letter code: Beta-cubebene synthase (550 aa).

Mg(2+)-binding residues include Asp303, Asp307, Asp447, and Glu455. The DDXXD motif motif lies at 303-307 (DDTYD).

This sequence belongs to the terpene synthase family. Tpsa subfamily. The cofactor is Mg(2+). As to expression, expressed in young developing leaves and in stamens. Not detected in tepals and carpels.

It carries out the reaction (2E,6E)-farnesyl diphosphate = beta-cubebene + diphosphate. The protein operates within secondary metabolite biosynthesis; terpenoid biosynthesis. Functionally, sesquiterpene synthase converting farnesyl diphosphate into beta-cubebene (24.5%), alpha-muurolene (19.3%), delta-cadinol (18.6%), delta-elemene (16.0%), tau-muurolene (10.8%), and beta-elemene (10.8%). No activity with geranyl diphosphate or geranylgeranyl diphosphate. The protein is Beta-cubebene synthase of Magnolia grandiflora (Southern magnolia).